The following is a 513-amino-acid chain: ATP synthase subunit alpha (513 aa).

169 to 176 (GDRQTGKT) contributes to the ATP binding site.

This sequence belongs to the ATPase alpha/beta chains family. F-type ATPases have 2 components, CF(1) - the catalytic core - and CF(0) - the membrane proton channel. CF(1) has five subunits: alpha(3), beta(3), gamma(1), delta(1), epsilon(1). CF(0) has three main subunits: a(1), b(2) and c(9-12). The alpha and beta chains form an alternating ring which encloses part of the gamma chain. CF(1) is attached to CF(0) by a central stalk formed by the gamma and epsilon chains, while a peripheral stalk is formed by the delta and b chains.

The protein resides in the cell inner membrane. The catalysed reaction is ATP + H2O + 4 H(+)(in) = ADP + phosphate + 5 H(+)(out). In terms of biological role, produces ATP from ADP in the presence of a proton gradient across the membrane. The alpha chain is a regulatory subunit. The protein is ATP synthase subunit alpha of Klebsiella pneumoniae subsp. pneumoniae (strain ATCC 700721 / MGH 78578).